The chain runs to 378 residues: Cytochrome b (378 aa).

The next 4 helical transmembrane spans lie at 34–54 (FGSL…FLAM), 78–99 (WLLR…YLHV), 114–134 (WLVG…GYVL), and 179–199 (FFTF…IHIL). H84 and H98 together coordinate heme b. Heme b contacts are provided by H183 and H197. Position 202 (H202) interacts with a ubiquinone. 4 helical membrane passes run 227 to 247 (FKDI…VLIN), 289 to 309 (LGGV…PFYH), 321 to 341 (INQI…WIGA), and 348 to 368 (YVLV…FNPL).

The protein belongs to the cytochrome b family. In terms of assembly, the main subunits of complex b-c1 are: cytochrome b, cytochrome c1 and the Rieske protein. Requires heme b as cofactor.

The protein localises to the mitochondrion inner membrane. Functionally, component of the ubiquinol-cytochrome c reductase complex (complex III or cytochrome b-c1 complex) that is part of the mitochondrial respiratory chain. The b-c1 complex mediates electron transfer from ubiquinol to cytochrome c. Contributes to the generation of a proton gradient across the mitochondrial membrane that is then used for ATP synthesis. The protein is Cytochrome b (MT-CYB) of Cochliomyia hominivorax (Primary screw-worm).